The chain runs to 247 residues: MNERIAILSAYSFVNIIEPANLIPKFLLIGKKKYIRGTILLANEGFNCSFSGSYENVNLVLKQLIELTGSKDVNVKINYSSVHPFQKLKVRLKKEIIAMNVKDLNIEVFKGDYIEPKDWDEFITKQNVIVIDTRNEYEIDIGTFKSAINPRTETFKQFPAWVQQNQALLQGKKIAMFCTGGIRCEKSTSLLKSIGYNEVYHLKGGILQYLEDTHNKNNLWQGKCFVFDDRRAIMDDLSPAEGYWLHR.

The 95-residue stretch at 124 to 218 (TKQNVIVIDT…YLEDTHNKNN (95 aa)) folds into the Rhodanese domain. The active-site Cysteine persulfide intermediate is cysteine 178.

This sequence belongs to the TrhO family.

It catalyses the reaction uridine(34) in tRNA + AH2 + O2 = 5-hydroxyuridine(34) in tRNA + A + H2O. Functionally, catalyzes oxygen-dependent 5-hydroxyuridine (ho5U) modification at position 34 in tRNAs. This is tRNA uridine(34) hydroxylase from Rickettsia typhi (strain ATCC VR-144 / Wilmington).